The chain runs to 373 residues: Spore germination protein KB (373 aa).

10 helical membrane passes run 11–31 (LFVM…PGSM), 37–57 (WIAV…YQGI), 78–98 (LSWL…ARVL), 105–125 (LLTF…LMVV), 143–163 (LLFG…IVSG), 185–205 (VFTQ…MIFP), 219–239 (IAMA…ISVL), 269–289 (VFFM…YLYA), 306–326 (LAYP…TNFS), and 338–358 (LYIH…VAVW).

The protein belongs to the amino acid-polyamine-organocation (APC) superfamily. Spore germination protein (SGP) (TC 2.A.3.9) family.

Its subcellular location is the cell membrane. In terms of biological role, involved in the germination response to the combination of glucose, fructose, L-asparagine, and KCl. This chain is Spore germination protein KB (gerKB), found in Bacillus subtilis (strain 168).